Reading from the N-terminus, the 706-residue chain is MRLAIRALLACAVLGLCLAEQTVRWCTVSNHEVSKCASFRDSMKSIVPAPPLVACVKRTSYLECIKAIADNEADAVTLDAGLVFEAGLSPYNLKPVVAEFYGSKTEPQTHYYAVAVVKKNSNFQLNQLQGKKSCHTGLGRSAGWNIPIGLLYWQLPEPRESLQKAVSNFFAGSCVPCADRTAVPNLCQLCVGKGTDKCACSNHEPYFGYSGAFKCLADGAGDVAFVKHSTVLENLPQEADRDEYQLLCRDNTRKSVDEYKDCYLASIPSHAVVARSVDGKEDLIWGLLNQAQEHFGTEKSKDFHLFSSPHGKDLLFKDSALGFLRIPPAMDTWLYLGYEYVTAIRNLREDIRPEVPKDECKKVKWCAIGHHEKVKCDEWSVNSGGNIECESAQSTEDCIAKIVKGEADAMSLDGGFIYIAGKCGLVPVLAENYETRSGSACVDTPEEGYHAVAVVKSSSDPDLTWNSLKGKKSCHTGVDRTAGWNIPMGLLYSEIKHCEFDKFFREGCAPGYRRNSTLCNLCIGSASGPGRECEPNNHERYYGYTGAFRCLVEKGDVAFVKHQTVEQNTDGRNPDDWAKDLKSENFKLLCPDGTRKSVTEFKSCYLARAPNHAVVSRKEKAACVCQELHNQQASYGKNGSHCPDKFCLFQSATKDLLFRDDTQCLANLQPTTTYKTYLGEKYLTAVANLRQCSTSRLLEACTFHRV.

The signal sequence occupies residues 1–19; sequence MRLAIRALLACAVLGLCLA. Transferrin-like domains follow at residues 23-349 and 363-691; these read VRWC…NLRE and VKWC…NLRQ. Intrachain disulfides connect cysteine 26/cysteine 64 and cysteine 36/cysteine 55. At arginine 40 the chain carries Dimethylated arginine. Fe(3+)-binding residues include aspartate 79 and tyrosine 111. Cystine bridges form between cysteine 134/cysteine 215, cysteine 174/cysteine 190, cysteine 177/cysteine 198, cysteine 187/cysteine 200, and cysteine 248/cysteine 262. Positions 136, 140, 142, and 143 each coordinate hydrogencarbonate. Tyrosine 209 contributes to the Fe(3+) binding site. Position 270 (histidine 270) interacts with Fe(3+). 11 disulfide bridges follow: cysteine 360–cysteine 623, cysteine 366–cysteine 398, cysteine 376–cysteine 389, cysteine 423–cysteine 701, cysteine 441–cysteine 664, cysteine 474–cysteine 550, cysteine 498–cysteine 692, cysteine 508–cysteine 522, cysteine 519–cysteine 533, cysteine 590–cysteine 604, and cysteine 642–cysteine 647. Serine 391 is subject to Phosphoserine. Fe(3+)-binding residues include aspartate 413 and tyrosine 449. Hydrogencarbonate is bound by residues threonine 476, arginine 480, alanine 482, and glycine 483. A glycan (N-linked (GlcNAc...) asparagine) is linked at asparagine 515. A Fe(3+)-binding site is contributed by tyrosine 544. Histidine 612 is a Fe(3+) binding site. Serine 693 bears the Phosphoserine mark.

The protein belongs to the transferrin family. Monomer. Part of a complex composed of SLC40A1/ferroportin, TF/transferrin and HEPH/hephaestin that transfers iron from cells to transferrin. As to expression, expressed by the liver and secreted in plasma.

The protein resides in the secreted. In terms of biological role, transferrins are iron binding transport proteins which can bind two Fe(3+) ions in association with the binding of an anion, usually bicarbonate. It is responsible for the transport of iron from sites of absorption and heme degradation to those of storage and utilization. Serum transferrin may also have a further role in stimulating cell proliferation. The polypeptide is Serotransferrin (TF) (Equus caballus (Horse)).